A 196-amino-acid chain; its full sequence is Peptidyl-tRNA hydrolase (196 aa).

Position 14 (tyrosine 14) interacts with tRNA. Histidine 19 acts as the Proton acceptor in catalysis. The tRNA site is built by tyrosine 64, asparagine 66, and asparagine 112.

Belongs to the PTH family. Monomer.

The protein resides in the cytoplasm. The catalysed reaction is an N-acyl-L-alpha-aminoacyl-tRNA + H2O = an N-acyl-L-amino acid + a tRNA + H(+). Functionally, hydrolyzes ribosome-free peptidyl-tRNAs (with 1 or more amino acids incorporated), which drop off the ribosome during protein synthesis, or as a result of ribosome stalling. Catalyzes the release of premature peptidyl moieties from peptidyl-tRNA molecules trapped in stalled 50S ribosomal subunits, and thus maintains levels of free tRNAs and 50S ribosomes. This is Peptidyl-tRNA hydrolase from Methylocella silvestris (strain DSM 15510 / CIP 108128 / LMG 27833 / NCIMB 13906 / BL2).